We begin with the raw amino-acid sequence, 751 residues long: MGKSGGRKKKSGGSNSNSSQVNSSETSGLSKPSTIVNGGVDFDASIFLKRAHELKEEGNKKFQARDYVGALEQYENGIKLIPKSHPDRAVFHSNRAACLMQMKPIDYESVISECSMALKSQPGFTRALLRRARAFEAVGKFDLAVQDVNVLLGSDPNHKDAGEISKRLKTALGPHQDLQSRPSPAALGASAALGGPIAGLGPCLPSRNVHKKGVTSPVGSVSLPNASNGKVERPQVVNPVTENGGSVSKGQASRVVLKPVSHSPKGSKVEELGSSSVAVVGKVQEKRIRWRPLKFVYDHDIRLGQMPVNCRFKELREIVSSRFPSSKAVLIKYKDNDGDLVTITSTAELKLAESAADCILTKEPDTDKSDSVGMLRLHVVDVSPEQEPMLLEEEEEEVEEKPVIEEVISSPTESLSETEINTEKTDKEVEKEKASSSEDPETKELEMDDWLFDFAHLFRTHVGIDPDAHIDLHELGMELCSEALEETVTSEKAQPLFDKASAKFQEVAALAFFNWGNVHMCAARKRIPLDESAGKEVVAAQLQTAYEWVKERYTLAKEKYEQALSIKPDFYEGLLALGQQQFEMAKLHWSYLLAQKIDISGWDPSETLNLFDSAEAKMKDATEMWEKLEEQRMDDLKNPNSNKKEEVSKRRKKQGGDGNEEVSETITAEEAAEQATAMRSQIHLFWGNMLFERSQVECKIGKDGWNKNLDSAVERFKLAGASEADIATVVKNHCSNEAAATEGDEKKVPAP.

Residues 1-11 (MGKSGGRKKKS) show a composition bias toward basic residues. A disordered region spans residues 1 to 33 (MGKSGGRKKKSGGSNSNSSQVNSSETSGLSKPS). Low complexity predominate over residues 12 to 28 (GGSNSNSSQVNSSETSG). TPR repeat units lie at residues 51 to 84 (AHEL…IPKS), 89 to 124 (AVFH…QPGF), and 125 to 158 (TRAL…DPNH). Positions 290-382 (WRPLKFVYDH…GMLRLHVVDV (93 aa)) constitute a PB1 domain. Positions 386-443 (QEPMLLEEEEEEVEEKPVIEEVISSPTESLSETEINTEKTDKEVEKEKASSSEDPETK) are disordered. Positions 390-399 (LLEEEEEEVE) are enriched in acidic residues. Residues 409 to 419 (SSPTESLSETE) are compositionally biased toward polar residues. Positions 421-443 (NTEKTDKEVEKEKASSSEDPETK) are enriched in basic and acidic residues. TPR repeat units follow at residues 434–468 (ASSS…DPDA), 481–514 (SEAL…AFFN), and 536–570 (EVVA…KPDF). Over residues 630–648 (EQRMDDLKNPNSNKKEEVS) the composition is skewed to basic and acidic residues. A disordered region spans residues 630–663 (EQRMDDLKNPNSNKKEEVSKRRKKQGGDGNEEVS).

As to quaternary structure, interacts with myosin XI-K. Expressed in roots, stems, leaves, apex, flowers and seeds. Detected throughout the petiole in juvenile and young leaves, but restricted to the petiole midvein in older leaves. Expressed in hydathodes, at the base of the trichome, in the vascular cylinder of primary root and lateral root, in emerging lateral root primordia, in pollen and in developing embryos, but not in mature embryos.

The protein resides in the cytoplasm. Its function is as follows. Required for plastid separation and partitioning during cell division. Not involved in plastid constriction or in the organization of cytoplasmic actin cables. Contributes to polar growth of root hairs. The sequence is that of Protein CLMP1 from Arabidopsis thaliana (Mouse-ear cress).